Reading from the N-terminus, the 297-residue chain is Ribosomal RNA small subunit methyltransferase H (297 aa).

Residues 36 to 38 (GGH), D56, L90, D104, and H111 contribute to the S-adenosyl-L-methionine site.

Belongs to the methyltransferase superfamily. RsmH family.

Its subcellular location is the cytoplasm. It catalyses the reaction cytidine(1402) in 16S rRNA + S-adenosyl-L-methionine = N(4)-methylcytidine(1402) in 16S rRNA + S-adenosyl-L-homocysteine + H(+). Functionally, specifically methylates the N4 position of cytidine in position 1402 (C1402) of 16S rRNA. In Dictyoglomus thermophilum (strain ATCC 35947 / DSM 3960 / H-6-12), this protein is Ribosomal RNA small subunit methyltransferase H.